The primary structure comprises 125 residues: Neuropeptide B (125 aa).

A signal peptide spans 1-24 (MARSATLAAAALALCLLLAPPGLA). A disordered region spans residues 54 to 73 (RRSQPYRGAEPPGGAGASPE). Residues 56-125 (SQPYRGAEPP…SLRAADCLAA (70 aa)) constitute a propeptide that is removed on maturation.

It belongs to the neuropeptide B/W family. In terms of tissue distribution, widely expressed in the central nervous system. High levels are found in substantia nigra, hypothalamus, hippocampus, spinal cord, placenta and fetal brain; lower levels are found in testis, uterus and ovary. Also detected at high levels in colorectal adenocarcinoma.

It is found in the secreted. Functionally, may be involved in the regulation of feeding, neuroendocrine system, memory, learning and in the afferent pain pathway. The protein is Neuropeptide B (NPB) of Homo sapiens (Human).